The following is a 219-amino-acid chain: Thiopurine S-methyltransferase (219 aa).

Residues Trp10, Leu45, Glu66, and Arg123 each contribute to the S-adenosyl-L-methionine site.

Belongs to the class I-like SAM-binding methyltransferase superfamily. TPMT family.

The protein localises to the cytoplasm. It carries out the reaction S-adenosyl-L-methionine + a thiopurine = S-adenosyl-L-homocysteine + a thiopurine S-methylether.. The protein is Thiopurine S-methyltransferase of Bordetella petrii (strain ATCC BAA-461 / DSM 12804 / CCUG 43448).